The sequence spans 152 residues: UPF0311 protein blr7842 (152 aa).

This sequence belongs to the UPF0311 family.

The polypeptide is UPF0311 protein blr7842 (Bradyrhizobium diazoefficiens (strain JCM 10833 / BCRC 13528 / IAM 13628 / NBRC 14792 / USDA 110)).